A 707-amino-acid polypeptide reads, in one-letter code: Translation initiation factor IF-2 (707 aa).

Residues 55-80 (LAEKPKEEKQKDQKNHEQEAQDKEEK) are compositionally biased toward basic and acidic residues. The disordered stretch occupies residues 55-88 (LAEKPKEEKQKDQKNHEQEAQDKEEKEIEEDSFY). Residues 209–378 (PRPPIVTVMG…LLVAEMEDLK (170 aa)) form the tr-type G domain. Residues 218–225 (GHVDHGKT) form a G1 region. GTP is bound at residue 218-225 (GHVDHGKT). The interval 243–247 (GITQH) is G2. The segment at 264–267 (DTPG) is G3. GTP-binding positions include 264–268 (DTPGH) and 318–321 (NKID). The segment at 318 to 321 (NKID) is G4. Positions 354 to 356 (SAK) are G5.

This sequence belongs to the TRAFAC class translation factor GTPase superfamily. Classic translation factor GTPase family. IF-2 subfamily.

The protein localises to the cytoplasm. Its function is as follows. One of the essential components for the initiation of protein synthesis. Protects formylmethionyl-tRNA from spontaneous hydrolysis and promotes its binding to the 30S ribosomal subunits. Also involved in the hydrolysis of GTP during the formation of the 70S ribosomal complex. This chain is Translation initiation factor IF-2, found in Caldanaerobacter subterraneus subsp. tengcongensis (strain DSM 15242 / JCM 11007 / NBRC 100824 / MB4) (Thermoanaerobacter tengcongensis).